A 293-amino-acid chain; its full sequence is Indole-3-glycerol phosphate synthase (293 aa).

The protein belongs to the TrpC family.

It carries out the reaction 1-(2-carboxyphenylamino)-1-deoxy-D-ribulose 5-phosphate + H(+) = (1S,2R)-1-C-(indol-3-yl)glycerol 3-phosphate + CO2 + H2O. It functions in the pathway amino-acid biosynthesis; L-tryptophan biosynthesis; L-tryptophan from chorismate: step 4/5. The protein is Indole-3-glycerol phosphate synthase of Rippkaea orientalis (strain PCC 8801 / RF-1) (Cyanothece sp. (strain PCC 8801)).